The following is a 318-amino-acid chain: Carbamate kinase (318 aa).

It belongs to the carbamate kinase family.

The protein resides in the cytoplasm. The enzyme catalyses hydrogencarbonate + NH4(+) + ATP = carbamoyl phosphate + ADP + H2O + H(+). It functions in the pathway metabolic intermediate metabolism; carbamoyl phosphate degradation; CO(2) and NH(3) from carbamoyl phosphate: step 1/1. The chain is Carbamate kinase (arcC) from Lentilactobacillus hilgardii (Lactobacillus hilgardii).